The primary structure comprises 618 residues: COMPASS component cclA (618 aa).

Residues 1–91 (MSSIQPVGSS…KKAAVAPNSA (91 aa)) form a disordered region. 2 stretches are compositionally biased toward low complexity: residues 8 to 19 (GSSGPSSNINSP) and 37 to 49 (NARS…SNAS). Over residues 57-69 (SKRNKRDSRKKRE) the composition is skewed to basic residues. The B30.2/SPRY domain maps to 157–368 (IADPGFPHIK…QSNVFSTKHL (212 aa)). Residues 588–618 (TLSVGHEGSPNPATPSAPLENTVPTEDVEMS) form a disordered region.

It belongs to the cclA family. Component of the COMPASS complex.

It is found in the nucleus. The protein localises to the chromosome. Its subcellular location is the telomere. Component of the COMPASS (Set1C) complex that specifically mono-, di- and trimethylates histone H3 to form H3K4me1/2/3, which subsequently plays a role in telomere length maintenance and transcription elongation regulation. Controls the production of several secondary metabolites, including gliotoxin, but does not contribute to pathogenicity. This chain is COMPASS component cclA, found in Aspergillus fumigatus (strain ATCC MYA-4609 / CBS 101355 / FGSC A1100 / Af293) (Neosartorya fumigata).